The sequence spans 119 residues: Holo-[acyl-carrier-protein] synthase (119 aa).

Positions 8 and 58 each coordinate Mg(2+).

The protein belongs to the P-Pant transferase superfamily. AcpS family. The cofactor is Mg(2+).

It localises to the cytoplasm. It catalyses the reaction apo-[ACP] + CoA = holo-[ACP] + adenosine 3',5'-bisphosphate + H(+). Transfers the 4'-phosphopantetheine moiety from coenzyme A to a Ser of acyl-carrier-protein. This chain is Holo-[acyl-carrier-protein] synthase, found in Streptococcus thermophilus (strain ATCC BAA-491 / LMD-9).